We begin with the raw amino-acid sequence, 192 residues long: Sarcoplasmic calcium-binding protein, beta chain (192 aa).

An N-acetylalanine modification is found at Ala-1. 4 consecutive EF-hand domains span residues 4–39 (WDNRVKYIVRYMYDIDNDGFLDKNDFECLAVRVTLI), 56–91 (IMANLWNEIAELADFNKDGEVTVDEFKQAVQKNCKG), 100–135 (AFKVFIGNQFKTIDVDGDGMVGVDEYRLDCITRSAF), and 136–171 (ADVKEIDDAYDKLCTEEDKKAGGINLARYQELYAQF). Ca(2+) is bound by residues Asp-17, Asp-19, Asp-21, Asp-28, Asp-69, Asn-71, Asp-73, Glu-75, Glu-80, Asp-113, Asp-115, Asp-117, Met-119, and Glu-124.

In terms of assembly, SCPs from crayfish, lobster, and shrimp are polymorphic dimers; three isotypes (alpha-alpha, alpha-beta, and beta-beta) have been identified.

Functionally, like parvalbumins, SCPs seem to be more abundant in fast contracting muscles, but no functional relationship can be established from this distribution. This chain is Sarcoplasmic calcium-binding protein, beta chain, found in Penaeus sp. (Penoeid shrimp).